A 579-amino-acid chain; its full sequence is Acyl-coenzyme A synthetase ACSM5, mitochondrial (579 aa).

The transit peptide at 1–26 directs the protein to the mitochondrion; it reads MRPWLRHLVLQALRNSRAFCGSHGKP. Lys-97 is subject to N6-acetyllysine; alternate. Lys-97 bears the N6-succinyllysine; alternate mark. Position 152 is an N6-acetyllysine (Lys-152). 230–238 lines the ATP pocket; the sequence is TSGTTGAPK. Position 303 is an N6-acetyllysine; alternate (Lys-303). An N6-succinyllysine; alternate modification is found at Lys-303. ATP is bound by residues 368-373, Asp-455, Arg-470, and Lys-566; that span reads EGYGQS.

Belongs to the ATP-dependent AMP-binding enzyme family. The cofactor is Mg(2+). Requires Mn(2+) as cofactor. As to expression, detected in kidney and liver.

Its subcellular location is the mitochondrion matrix. The catalysed reaction is a medium-chain fatty acid + ATP + CoA = a medium-chain fatty acyl-CoA + AMP + diphosphate. Catalyzes the activation of fatty acids by CoA to produce an acyl-CoA, the first step in fatty acid metabolism. The polypeptide is Acyl-coenzyme A synthetase ACSM5, mitochondrial (ACSM5) (Homo sapiens (Human)).